The following is a 335-amino-acid chain: tRNA N6-adenosine threonylcarbamoyltransferase (335 aa).

The Fe cation site is built by histidine 111 and histidine 115. Substrate contacts are provided by residues 133 to 137 (LISGG), aspartate 166, glycine 179, and asparagine 276. A Fe cation-binding site is contributed by aspartate 301.

The protein belongs to the KAE1 / TsaD family. Fe(2+) serves as cofactor.

The protein localises to the cytoplasm. The catalysed reaction is L-threonylcarbamoyladenylate + adenosine(37) in tRNA = N(6)-L-threonylcarbamoyladenosine(37) in tRNA + AMP + H(+). Its function is as follows. Required for the formation of a threonylcarbamoyl group on adenosine at position 37 (t(6)A37) in tRNAs that read codons beginning with adenine. Is involved in the transfer of the threonylcarbamoyl moiety of threonylcarbamoyl-AMP (TC-AMP) to the N6 group of A37, together with TsaE and TsaB. TsaD likely plays a direct catalytic role in this reaction. This Wolbachia sp. subsp. Drosophila simulans (strain wRi) protein is tRNA N6-adenosine threonylcarbamoyltransferase.